The sequence spans 783 residues: Cation/H(+) antiporter 11 (783 aa).

12 consecutive transmembrane segments (helical) span residues 31–51, 61–81, 101–120, 135–155, 175–195, 205–225, 244–264, 276–295, 300–322, 360–380, 389–409, and 418–438; these read VVFGYSLPLLEIQIILIFFCI, IGVSQIVSYMIAGLILGPQLF, AALRCISVFGRLMFTFLMTV, VVIGIVSFFAPLFSLSFLNLF, VIVITQSQILLPSTTYILLEL, LALSASAINDMLGIFAMIVAT, AVIIFFLIVFFVFKPMVQWII, IYIHAVILTAFASAAYFVFF, VLGPLIIGIIIPEGPPLGSALEA, IFLTLLILVIKLVACLTLCLY, LAVSLILSYKSFVEFVLYEAV, and ATYAFLILYSLLSAGIVPMVV.

This sequence belongs to the monovalent cation:proton antiporter 2 (CPA2) transporter (TC 2.A.37) family. CHX (TC 2.A.37.4) subfamily. As to expression, specifically expressed in pollen.

The protein resides in the membrane. Its function is as follows. May operate as a cation/H(+) antiporter. The sequence is that of Cation/H(+) antiporter 11 (CHX11) from Arabidopsis thaliana (Mouse-ear cress).